A 153-amino-acid chain; its full sequence is Arginine regulator (153 aa).

The protein belongs to the ArgR family.

The protein localises to the cytoplasm. The protein operates within amino-acid degradation; L-arginine degradation via ADI pathway. Functionally, regulates the transcription of the arc operon, involved in arginine catabolism. The polypeptide is Arginine regulator (argR1) (Lactiplantibacillus plantarum (strain ATCC BAA-793 / NCIMB 8826 / WCFS1) (Lactobacillus plantarum)).